The following is a 160-amino-acid chain: SsrA-binding protein (160 aa).

Positions Gly-133–Gly-160 are disordered. Residues Asp-138–Gly-160 are compositionally biased toward basic and acidic residues.

The protein belongs to the SmpB family.

It is found in the cytoplasm. In terms of biological role, required for rescue of stalled ribosomes mediated by trans-translation. Binds to transfer-messenger RNA (tmRNA), required for stable association of tmRNA with ribosomes. tmRNA and SmpB together mimic tRNA shape, replacing the anticodon stem-loop with SmpB. tmRNA is encoded by the ssrA gene; the 2 termini fold to resemble tRNA(Ala) and it encodes a 'tag peptide', a short internal open reading frame. During trans-translation Ala-aminoacylated tmRNA acts like a tRNA, entering the A-site of stalled ribosomes, displacing the stalled mRNA. The ribosome then switches to translate the ORF on the tmRNA; the nascent peptide is terminated with the 'tag peptide' encoded by the tmRNA and targeted for degradation. The ribosome is freed to recommence translation, which seems to be the essential function of trans-translation. The sequence is that of SsrA-binding protein from Rhizorhabdus wittichii (strain DSM 6014 / CCUG 31198 / JCM 15750 / NBRC 105917 / EY 4224 / RW1) (Sphingomonas wittichii).